A 243-amino-acid chain; its full sequence is tRNA pseudouridine synthase A (243 aa).

Aspartate 54 (nucleophile) is an active-site residue. Tyrosine 112 contributes to the substrate binding site.

The protein belongs to the tRNA pseudouridine synthase TruA family. As to quaternary structure, homodimer.

The catalysed reaction is uridine(38/39/40) in tRNA = pseudouridine(38/39/40) in tRNA. In terms of biological role, formation of pseudouridine at positions 38, 39 and 40 in the anticodon stem and loop of transfer RNAs. The polypeptide is tRNA pseudouridine synthase A (Aster yellows witches'-broom phytoplasma (strain AYWB)).